Consider the following 284-residue polypeptide: Phosphoenolpyruvate guanylyltransferase (284 aa).

Positions 94–123 (ADLSADEPAGTDAERRADPSAENRASTSAQ) are disordered. Positions 105 to 114 (DAERRADPSA) are enriched in basic and acidic residues. Threonine 203, glycine 219, and serine 222 together coordinate phosphoenolpyruvate.

The protein belongs to the CofC family.

The catalysed reaction is phosphoenolpyruvate + GTP + H(+) = enolpyruvoyl-2-diphospho-5'-guanosine + diphosphate. It functions in the pathway cofactor biosynthesis; coenzyme F420 biosynthesis. Functionally, guanylyltransferase that catalyzes the activation of phosphoenolpyruvate (PEP) as enolpyruvoyl-2-diphospho-5'-guanosine, via the condensation of PEP with GTP. It is involved in the biosynthesis of coenzyme F420, a hydride carrier cofactor. The sequence is that of Phosphoenolpyruvate guanylyltransferase from Sanguibacter keddieii (strain ATCC 51767 / DSM 10542 / NCFB 3025 / ST-74).